A 440-amino-acid chain; its full sequence is Xylose isomerase (440 aa).

Residues His100 and Asp103 contribute to the active site. Residues Glu231, Glu267, His270, Asp295, Asp306, Asp308, and Asp338 each coordinate Mg(2+).

It belongs to the xylose isomerase family. As to quaternary structure, homotetramer. The cofactor is Mg(2+).

It is found in the cytoplasm. The catalysed reaction is alpha-D-xylose = alpha-D-xylulofuranose. The protein is Xylose isomerase of Burkholderia ambifaria (strain MC40-6).